The chain runs to 255 residues: uncharacterized protein (255 aa).

This is an uncharacterized protein from Pseudomonas chlororaphis (Pseudomonas aureofaciens).